The following is a 316-amino-acid chain: Retinol dehydrogenase 11 (316 aa).

A helical; Signal-anchor for type II membrane protein membrane pass occupies residues 1–21 (MFGFLLLLSLPFILYLVTPKI). The Cytoplasmic portion of the chain corresponds to 22–316 (RKMLSSGVCT…CDLLGLPVDW (295 aa)). 45–51 (GANTGIG) provides a ligand contact to NADP(+). Lys-109 is modified (N6-acetyllysine). Residue Ser-174 coordinates substrate. Tyr-199 (proton acceptor) is an active-site residue.

The protein belongs to the short-chain dehydrogenases/reductases (SDR) family. In terms of processing, not glycosylated. Expressed at high level in liver and testis. Expressed at lower levels in smooth muscle, thymus, submaxillary gland and epididymis. In testis, expression is restricted to pachytene spermatocytes. Also expressed in four layers of the retina, including the outer segment of rods and cones.

The protein resides in the endoplasmic reticulum membrane. The catalysed reaction is all-trans-retinol + NADP(+) = all-trans-retinal + NADPH + H(+). It carries out the reaction 11-cis-retinol + NADP(+) = 11-cis-retinal + NADPH + H(+). The enzyme catalyses 9-cis-retinol + NADP(+) = 9-cis-retinal + NADPH + H(+). It catalyses the reaction 13-cis-retinol + NADP(+) = 13-cis-retinal + NADPH + H(+). The catalysed reaction is a medium-chain primary fatty alcohol + NADP(+) = a medium-chain fatty aldehyde + NADPH + H(+). It carries out the reaction (2E,6Z)-nona-2,6-dien-1-ol + NADP(+) = (2E,6Z)-nona-2,6-dienal + NADPH + H(+). The enzyme catalyses (E)-oct-2-en-1-ol + NADP(+) = (2E)-octenal + NADPH + H(+). It catalyses the reaction (E)-non-2-en-1-ol + NADP(+) = (E)-non-2-enal + NADPH + H(+). The catalysed reaction is heptan-1-ol + NADP(+) = heptanal + NADPH + H(+). It carries out the reaction hexan-1-ol + NADP(+) = hexanal + NADPH + H(+). The enzyme catalyses decan-1-ol + NADP(+) = decanal + NADPH + H(+). It catalyses the reaction nonan-1-ol + NADP(+) = nonanal + NADPH + H(+). The catalysed reaction is octan-1-ol + NADP(+) = octanal + NADPH + H(+). It carries out the reaction (Z)-non-6-en-1-ol + NADP(+) = (Z)-non-6-enal + NADPH + H(+). It functions in the pathway cofactor metabolism; retinol metabolism. Retinol dehydrogenase with a clear preference for NADP. Displays high activity towards 9-cis, 11-cis and all-trans-retinol, and to a lesser extent on 13-cis-retinol. Also exhibits reductive activity towards toxic lipid peroxidation products such as medium-chain aldehydes trans-2-nonenal, nonanal, and cis-6-nonenal. Has no dehydrogenase activity towards steroid. Seems to be required for homeostasis of retinol in liver and testis. In Mus musculus (Mouse), this protein is Retinol dehydrogenase 11 (Rdh11).